We begin with the raw amino-acid sequence, 369 residues long: Peptide chain release factor 2 (369 aa).

Position 249 is an N5-methylglutamine (Gln249).

This sequence belongs to the prokaryotic/mitochondrial release factor family. Post-translationally, methylated by PrmC. Methylation increases the termination efficiency of RF2.

The protein resides in the cytoplasm. Its function is as follows. Peptide chain release factor 2 directs the termination of translation in response to the peptide chain termination codons UGA and UAA. The protein is Peptide chain release factor 2 of Thermosipho africanus (strain TCF52B).